The sequence spans 589 residues: Heterogeneous nuclear ribonucleoprotein L (589 aa).

A compositionally biased stretch (basic residues) spans 1–16; that stretch reads MSRRLLPRAEKRRRRL. The tract at residues 1–100 is disordered; that stretch reads MSRRLLPRAE…NYDDPHKTPA (100 aa). Over residues 17 to 27 the composition is skewed to basic and acidic residues; it reads EQRQQPDEQRR. Residues 38 to 54 are compositionally biased toward gly residues; that stretch reads AGGGGGGGRYYGGGSEG. A Phosphoserine modification is found at Ser-52. Glycyl lysine isopeptide (Lys-Gly) (interchain with G-Cter in SUMO2) cross-links involve residues Lys-59 and Lys-62. Positions 69 to 90 are enriched in gly residues; the sequence is QHGGGGGGGGGAGAAGGGGGGE. Ser-101 is modified (phosphoserine). The 75-residue stretch at 102-176 folds into the RRM 1 domain; the sequence is PVVHIRGLID…HPAFVNYSTS (75 aa). Lys-136 is covalently cross-linked (Glycyl lysine isopeptide (Lys-Gly) (interchain with G-Cter in SUMO2)). At Ser-185 the chain carries Phosphoserine. The RRM 2 domain maps to 193–270; sequence SVLLFTILNP…CTLKIEYAKP (78 aa). The residue at position 269 (Lys-269) is an N6-acetyllysine. A compositionally biased stretch (polar residues) spans 284–301; it reads DYTNPNLSGQGDPGSNPN. A disordered region spans residues 284-378; that stretch reads DYTNPNLSGQ…PPPPPEYGPH (95 aa). Phosphoserine is present on residues Ser-291 and Ser-298. A Glycyl lysine isopeptide (Lys-Gly) (interchain with G-Cter in SUMO2) cross-link involves residue Lys-302. Asymmetric dimethylarginine occurs at positions 354 and 358. Residues 364 to 375 show a composition bias toward pro residues; it reads GHPPPPPPPPEY. Ser-381 is subject to Phosphoserine. RRM domains are found at residues 382-478 and 495-583; these read PVLM…KDFS and RIQH…LCFS. Phosphoserine; by CaMK4 is present on Ser-544. Residue Lys-568 forms a Glycyl lysine isopeptide (Lys-Gly) (interchain with G-Cter in SUMO2) linkage.

In terms of assembly, identified in a IGF2BP1-dependent mRNP granule complex containing untranslated mRNAs. Interacts with HNRNPLL. Interacts with APEX1; the interaction is DNA-dependent. Component of a complex with SETD2. Interacts with ELAVL1. Part of a transcription inhibitory ribonucleoprotein complex composed at least of the circular RNA circZNF827, ZNF827 and HNRNPK. Interacts with CHD8 in an RNA-dependent manner. Post-translationally, several isoelectric forms of the L protein are probably the results of post-translational modifications. Phosphorylation at Ser-544 by CaMK4 enhances interaction with a CaMK4-responsive RNA element (CaRRE1), and prevents inclusion of the stress axis-regulated exon (STREX) of the KCNMA1 potassium channel transcripts upon membrane depolarization.

It localises to the nucleus. The protein localises to the nucleoplasm. The protein resides in the cytoplasm. Splicing factor binding to exonic or intronic sites and acting as either an activator or repressor of exon inclusion. Exhibits a binding preference for CA-rich elements. Component of the heterogeneous nuclear ribonucleoprotein (hnRNP) complexes and associated with most nascent transcripts. Associates, together with APEX1, to the negative calcium responsive element (nCaRE) B2 of the APEX2 promoter. As part of a ribonucleoprotein complex composed at least of ZNF827, HNRNPK and the circular RNA circZNF827 that nucleates the complex on chromatin, may negatively regulate the transcription of genes involved in neuronal differentiation. Regulates alternative splicing of a core group of genes involved in neuronal differentiation, likely by mediating H3K36me3-coupled transcription elongation and co-transcriptional RNA processing via interaction with CHD8. The polypeptide is Heterogeneous nuclear ribonucleoprotein L (HNRNPL) (Homo sapiens (Human)).